The following is a 235-amino-acid chain: Alpha-S2-casein (235 aa).

The first 15 residues, 1 to 15, serve as a signal peptide directing secretion; sequence MKFFIFTCLLAVAFA. Phosphoserine is present on residues Ser23, Ser24, Ser25, Ser28, Ser47, Ser72, Ser73, Ser74, Ser77, Ser147, Ser149, and Ser168. Residues 144–158 are compositionally biased toward polar residues; it reads EELSTSEEPVSSSQE. The disordered stretch occupies residues 144–163; that stretch reads EELSTSEEPVSSSQEENTKT.

It belongs to the alpha-casein family. Mammary gland specific. Secreted in milk.

The protein localises to the secreted. Important role in the capacity of milk to transport calcium phosphate. In Sus scrofa (Pig), this protein is Alpha-S2-casein (CSN1S2).